Here is a 1085-residue protein sequence, read N- to C-terminus: Solute carrier family 12 member 4 (1085 aa).

Residues 1-119 (MPHFTVVPVD…RRAAEAPSMG (119 aa)) lie on the Cytoplasmic side of the membrane. Phosphoserine occurs at positions 24, 47, 51, 81, and 88. Residues 120–141 (TLMGVYLPCLQNIFGVILFLRL) form a discontinuously helical membrane-spanning segment. N131 and I132 together coordinate K(+). Residues 142–149 (TWMVGTAG) are Extracellular-facing. The helical transmembrane segment at 150 to 172 (VLQALLIVLICCCCTLLTAISMS) threads the bilayer. Residues 173-196 (AIATNGVVPAGGSYFMISRSLGPE) are Cytoplasmic-facing. The helical transmembrane segment at 197–225 (FGGAVGLCFYLGTTFAAAMYILGAIEILL) threads the bilayer. Position 216 (Y216) interacts with K(+). The Extracellular portion of the chain corresponds to 226-248 (TYIAPPAAIFYPSGAHDTSNATL). N245 carries an N-linked (GlcNAc...) asparagine glycan. The next 2 membrane-spanning stretches (helical) occupy residues 249–271 (NNMR…VGVK) and 272–297 (YVNK…GGIK). Topologically, residues 298–419 (SIFDPPVFPV…LYVVADIATS (122 aa)) are extracellular. C308 and C323 are oxidised to a cystine. N-linked (GlcNAc...) asparagine glycosylation is found at N312, N331, N347, and N361. A disulfide bond links C343 and C353. Residues 420-440 (FTVLVGIFFPSVTGIMAGSNR) traverse the membrane as a helical segment. 2 residues coordinate K(+): P429 and T432. Chloride is bound by residues G433, I434, and M435. The Cytoplasmic portion of the chain corresponds to 441–450 (SGDLRDAQKS). Residues 451–473 (IPVGTILAIITTSLVYFSSVVLF) form a helical membrane-spanning segment. Topologically, residues 474-504 (GACIEGVVLRDKYGDGVSRNLVVGTLAWPSP) are extracellular. Residues 505–531 (WVIVIGSFFSTCGAGLQSLTGAPRLLQ) traverse the membrane as a helical segment. Residues 532 to 554 (AIAKDNIIPFLRVFGHGKVNGEP) are Cytoplasmic-facing. The next 2 membrane-spanning stretches (helical) occupy residues 555 to 575 (TWAL…ASLD) and 576 to 598 (MVAP…ACAV). A chloride-binding site is contributed by Y589. Over 599 to 612 (QTLLRTPNWRPRFK) the chain is Cytoplasmic. Helical transmembrane passes span 613 to 635 (YYHW…VSSW) and 636 to 651 (YYAL…IYKY). Topologically, residues 652–1085 (IEYQGAEKEW…GGREVITIYS (434 aa)) are cytoplasmic. Residues 665 to 681 (IRGLSLSAARYALLRLE) form a scissor helix region. Residues L697, K699, K707, Y708, and V730 each contribute to the ATP site. The residue at position 734 (S734) is a Phosphoserine. Positions 794, 795, and 797 each coordinate ATP. 2 positions are modified to phosphoserine: S916 and S967. Position 983 is a phosphothreonine (T983). S1050 carries the phosphoserine modification.

Belongs to the SLC12A transporter family. K/Cl co-transporter subfamily. In terms of assembly, homodimer; adopts a domain-swap conformation at the scissor helices connecting the transmembrane domain and C-terminal domain. Heterodimer with other K-Cl cotransporters. In terms of processing, phosphorylated, phosphorylation may regulate transporter activity. As to expression, ubiquitous. Levels are much higher in erythrocytes from patients with Hb SC and Hb SS compared to normal AA erythrocytes. This may contribute to red blood cell dehydration and to the manifestation of sickle cell disease by increasing the intracellular concentration of HbS. In terms of tissue distribution, not detected in circulating reticulocytes.

Its subcellular location is the cell membrane. The enzyme catalyses K(+)(in) + chloride(in) = K(+)(out) + chloride(out). Inhibited by WNK3. Mediates electroneutral potassium-chloride cotransport when activated by cell swelling. May contribute to cell volume homeostasis in single cells. May be involved in the regulation of basolateral Cl(-) exit in NaCl absorbing epithelia. In terms of biological role, no transporter activity. The sequence is that of Solute carrier family 12 member 4 from Homo sapiens (Human).